Consider the following 235-residue polypeptide: Serine protease SplA (235 aa).

A signal peptide spans 1-35; that stretch reads MNKNVMIKGLTALTILTSLGFAENISDQPHSIAKA. Residues His74, Asp113, and Ser189 each act as charge relay system in the active site.

It belongs to the peptidase S1B family.

It is found in the secreted. This Staphylococcus aureus protein is Serine protease SplA (splA).